Here is a 391-residue protein sequence, read N- to C-terminus: Phosphoglycerate kinase (391 aa).

Substrate is bound by residues 21–23, R36, 59–62, R113, and R146; these read DLN and HLGR. ATP is bound by residues K197, E319, and 345–348; that span reads GGDT.

This sequence belongs to the phosphoglycerate kinase family. Monomer.

The protein resides in the cytoplasm. It catalyses the reaction (2R)-3-phosphoglycerate + ATP = (2R)-3-phospho-glyceroyl phosphate + ADP. The protein operates within carbohydrate degradation; glycolysis; pyruvate from D-glyceraldehyde 3-phosphate: step 2/5. In Shewanella halifaxensis (strain HAW-EB4), this protein is Phosphoglycerate kinase.